The sequence spans 436 residues: UDP-N-acetylglucosamine 1-carboxyvinyltransferase (436 aa).

Position 22 to 23 (22 to 23 (KN)) interacts with phosphoenolpyruvate. Arginine 96 is a UDP-N-acetyl-alpha-D-glucosamine binding site. Cysteine 120 acts as the Proton donor in catalysis. Position 120 is a 2-(S-cysteinyl)pyruvic acid O-phosphothioketal (cysteine 120). UDP-N-acetyl-alpha-D-glucosamine-binding positions include 125 to 129 (RPIDL), aspartate 309, and isoleucine 331.

Belongs to the EPSP synthase family. MurA subfamily.

It is found in the cytoplasm. The catalysed reaction is phosphoenolpyruvate + UDP-N-acetyl-alpha-D-glucosamine = UDP-N-acetyl-3-O-(1-carboxyvinyl)-alpha-D-glucosamine + phosphate. It participates in cell wall biogenesis; peptidoglycan biosynthesis. Cell wall formation. Adds enolpyruvyl to UDP-N-acetylglucosamine. This chain is UDP-N-acetylglucosamine 1-carboxyvinyltransferase, found in Acidobacterium capsulatum (strain ATCC 51196 / DSM 11244 / BCRC 80197 / JCM 7670 / NBRC 15755 / NCIMB 13165 / 161).